A 155-amino-acid chain; its full sequence is Riboflavin kinase (155 aa).

ATP is bound by residues G15, K21, T27, and N29. The Mg(2+) site is built by T27 and N29. E79 serves as the catalytic Nucleophile. I82, H84, and Y91 together coordinate ATP. Residues R104, K107, and F109 each contribute to the FMN site.

In terms of assembly, monomer. Directly interacts with TNFRSF1A death domain. TNFRSF1A-binding may be supported by TRADD. In the absence of TNFRSF1A, interacts with TRADD. Independently of TNFRSF1A, interacts with the NADPH oxidase subunit CYBA. Zn(2+) is required as a cofactor. The cofactor is Mg(2+). As to expression, detected in brain, placenta and urinary bladder.

Its subcellular location is the cytoplasm. It carries out the reaction riboflavin + ATP = FMN + ADP + H(+). Its pathway is cofactor biosynthesis; FMN biosynthesis; FMN from riboflavin (ATP route): step 1/1. In terms of biological role, catalyzes the phosphorylation of riboflavin (vitamin B2) to form flavin-mononucleotide (FMN), hence rate-limiting enzyme in the synthesis of FAD. Essential for TNF-induced reactive oxygen species (ROS) production. Through its interaction with both TNFRSF1A and CYBA, physically and functionally couples TNFRSF1A to NADPH oxidase. TNF-activation of RFK may enhance the incorporation of FAD in NADPH oxidase, a critical step for the assembly and activation of NADPH oxidase. The polypeptide is Riboflavin kinase (RFK) (Homo sapiens (Human)).